The following is a 430-amino-acid chain: Enolase (430 aa).

Gln163 contacts (2R)-2-phosphoglycerate. Residue Glu205 is the Proton donor of the active site. Mg(2+) contacts are provided by Asp242, Glu285, and Asp312. Residues Lys337, Arg366, Ser367, and Lys388 each coordinate (2R)-2-phosphoglycerate. The active-site Proton acceptor is Lys337.

The protein belongs to the enolase family. The cofactor is Mg(2+).

The protein localises to the cytoplasm. The protein resides in the secreted. It is found in the cell surface. The catalysed reaction is (2R)-2-phosphoglycerate = phosphoenolpyruvate + H2O. Its pathway is carbohydrate degradation; glycolysis; pyruvate from D-glyceraldehyde 3-phosphate: step 4/5. In terms of biological role, catalyzes the reversible conversion of 2-phosphoglycerate (2-PG) into phosphoenolpyruvate (PEP). It is essential for the degradation of carbohydrates via glycolysis. In Rubrobacter xylanophilus (strain DSM 9941 / JCM 11954 / NBRC 16129 / PRD-1), this protein is Enolase.